A 99-amino-acid polypeptide reads, in one-letter code: Beta-2-microglobulin (99 aa).

The region spanning 5–93 is the Ig-like C1-type domain; it reads PRVQVYSRHP…HITLSEPKIV (89 aa). Cys-25 and Cys-80 are oxidised to a cystine.

This sequence belongs to the beta-2-microglobulin family. In terms of assembly, heterodimer of an alpha chain and a beta chain. Beta-2-microglobulin is the beta-chain of major histocompatibility complex class I molecules.

It localises to the secreted. Its function is as follows. Component of the class I major histocompatibility complex (MHC). Involved in the presentation of peptide antigens to the immune system. The sequence is that of Beta-2-microglobulin (B2M) from Cavia porcellus (Guinea pig).